Here is a 232-residue protein sequence, read N- to C-terminus: Ornithine carbamoyltransferase (232 aa).

Residues Q15, R39, and 66–69 each bind carbamoyl phosphate; that span reads HPTQ. Residues N99, D163, and 167 to 168 each bind L-ornithine; that span reads SM. Carbamoyl phosphate is bound by residues 204-207 and T232; that span reads HCLP.

This sequence belongs to the aspartate/ornithine carbamoyltransferase superfamily. OTCase family.

Its subcellular location is the cytoplasm. The catalysed reaction is carbamoyl phosphate + L-ornithine = L-citrulline + phosphate + H(+). Its pathway is amino-acid biosynthesis; L-arginine biosynthesis; L-arginine from L-ornithine and carbamoyl phosphate: step 1/3. Its function is as follows. Reversibly catalyzes the transfer of the carbamoyl group from carbamoyl phosphate (CP) to the N(epsilon) atom of ornithine (ORN) to produce L-citrulline. The protein is Ornithine carbamoyltransferase (argF) of Neisseria subflava.